The following is a 431-amino-acid chain: Adenylosuccinate synthetase (431 aa).

GTP is bound by residues 12–18 (GDEGKGK) and 40–42 (GHT). The active-site Proton acceptor is D13. Positions 13 and 40 each coordinate Mg(2+). Residues 13–16 (DEGK), 38–41 (NAGH), T131, R145, Q225, T240, and R304 contribute to the IMP site. Catalysis depends on H41, which acts as the Proton donor. 300–306 (TVTGRKR) provides a ligand contact to substrate. Residues R306, 332 to 334 (KLD), and 414 to 416 (STS) contribute to the GTP site.

Belongs to the adenylosuccinate synthetase family. Homodimer. Mg(2+) serves as cofactor.

It is found in the cytoplasm. The enzyme catalyses IMP + L-aspartate + GTP = N(6)-(1,2-dicarboxyethyl)-AMP + GDP + phosphate + 2 H(+). It functions in the pathway purine metabolism; AMP biosynthesis via de novo pathway; AMP from IMP: step 1/2. In terms of biological role, plays an important role in the de novo pathway of purine nucleotide biosynthesis. Catalyzes the first committed step in the biosynthesis of AMP from IMP. The polypeptide is Adenylosuccinate synthetase (Roseobacter denitrificans (strain ATCC 33942 / OCh 114) (Erythrobacter sp. (strain OCh 114))).